A 388-amino-acid polypeptide reads, in one-letter code: Succinate--CoA ligase [ADP-forming] subunit beta (388 aa).

The ATP-grasp domain maps to 9 to 244; sequence KQLFAEYGLP…PSQDDPREAH (236 aa). ATP-binding positions include Lys-46, 53–55, Glu-99, Thr-102, and Glu-107; that span reads GRG. Mg(2+) contacts are provided by Asn-199 and Asp-213. Residues Asn-264 and 321 to 323 each bind substrate; that span reads GIV.

This sequence belongs to the succinate/malate CoA ligase beta subunit family. In terms of assembly, heterotetramer of two alpha and two beta subunits. Requires Mg(2+) as cofactor.

It carries out the reaction succinate + ATP + CoA = succinyl-CoA + ADP + phosphate. The catalysed reaction is GTP + succinate + CoA = succinyl-CoA + GDP + phosphate. Its pathway is carbohydrate metabolism; tricarboxylic acid cycle; succinate from succinyl-CoA (ligase route): step 1/1. Its function is as follows. Succinyl-CoA synthetase functions in the citric acid cycle (TCA), coupling the hydrolysis of succinyl-CoA to the synthesis of either ATP or GTP and thus represents the only step of substrate-level phosphorylation in the TCA. The beta subunit provides nucleotide specificity of the enzyme and binds the substrate succinate, while the binding sites for coenzyme A and phosphate are found in the alpha subunit. This Pseudomonas syringae pv. syringae (strain B728a) protein is Succinate--CoA ligase [ADP-forming] subunit beta.